A 228-amino-acid chain; its full sequence is Biosynthetic peptidoglycan transglycosylase (228 aa).

A helical membrane pass occupies residues 8-28; that stretch reads ILAALVAAFLLYNLWVLGHII.

It belongs to the glycosyltransferase 51 family.

It localises to the cell inner membrane. The catalysed reaction is [GlcNAc-(1-&gt;4)-Mur2Ac(oyl-L-Ala-gamma-D-Glu-L-Lys-D-Ala-D-Ala)](n)-di-trans,octa-cis-undecaprenyl diphosphate + beta-D-GlcNAc-(1-&gt;4)-Mur2Ac(oyl-L-Ala-gamma-D-Glu-L-Lys-D-Ala-D-Ala)-di-trans,octa-cis-undecaprenyl diphosphate = [GlcNAc-(1-&gt;4)-Mur2Ac(oyl-L-Ala-gamma-D-Glu-L-Lys-D-Ala-D-Ala)](n+1)-di-trans,octa-cis-undecaprenyl diphosphate + di-trans,octa-cis-undecaprenyl diphosphate + H(+). The protein operates within cell wall biogenesis; peptidoglycan biosynthesis. Peptidoglycan polymerase that catalyzes glycan chain elongation from lipid-linked precursors. The sequence is that of Biosynthetic peptidoglycan transglycosylase from Chromobacterium violaceum (strain ATCC 12472 / DSM 30191 / JCM 1249 / CCUG 213 / NBRC 12614 / NCIMB 9131 / NCTC 9757 / MK).